Consider the following 23-residue polypeptide: M-myrmeciitoxin-Mp2b (23 aa).

Gln23 bears the Glutamine amide mark.

The protein belongs to the formicidae venom precursor-01 superfamily. Ant pilosulin family. As to quaternary structure, heterodimer with M-MIITX-Mp2a (pilosulin-3a) (AC Q26464); disulfide-linked. Only heterodimers (and not monomers) have been identified in the venom. Expressed by the venom gland.

It localises to the secreted. Heterodimer protein that may serve both defensive (pain-inducing) and predatory (insecticidal) roles. Has membrane-disrupting activity and shows induction of non-specific calcium influx into cells,. Shows broad-spectrum activity against a diverse range of bacteria, and cell lines, as well as hemolytic activity (EC(50)=2.18 uM). In vivo, shows moderate insecticidal activity against D.melanogaster and potent anthelmintic activity against the veterinary nematode H.contortus. In addition, intraplantar injection into mice induces nocifensive behavior and mechanical allodynia. This chain is M-myrmeciitoxin-Mp2b, found in Myrmecia pilosula (Jack jumper ant).